We begin with the raw amino-acid sequence, 740 residues long: NAD(P)H-quinone oxidoreductase subunit 5, chloroplastic (740 aa).

A run of 16 helical transmembrane segments spans residues 9-29 (WIIP…LILF), 40-60 (WAFQ…YLSI), 89-109 (IDPL…MVLI), 125-145 (FAYM…SNLI), 147-167 (IYIF…FWFT), 185-205 (GDFG…SFEF), 219-239 (NEVD…GAVA), 258-278 (TPIS…FLVA), 286-306 (VIPY…LLGA), 327-347 (LGYM…FHLI), 354-374 (ALLF…VGYS), 396-416 (ITFL…CFWS), 425-445 (WLYS…TAFY), 543-563 (LFPI…GIPF), 602-622 (VLSV…YKPI), and 717-737 (SYLF…YLLF).

It belongs to the complex I subunit 5 family. In terms of assembly, NDH is composed of at least 16 different subunits, 5 of which are encoded in the nucleus.

It is found in the plastid. The protein localises to the chloroplast thylakoid membrane. The catalysed reaction is a plastoquinone + NADH + (n+1) H(+)(in) = a plastoquinol + NAD(+) + n H(+)(out). The enzyme catalyses a plastoquinone + NADPH + (n+1) H(+)(in) = a plastoquinol + NADP(+) + n H(+)(out). Functionally, NDH shuttles electrons from NAD(P)H:plastoquinone, via FMN and iron-sulfur (Fe-S) centers, to quinones in the photosynthetic chain and possibly in a chloroplast respiratory chain. The immediate electron acceptor for the enzyme in this species is believed to be plastoquinone. Couples the redox reaction to proton translocation, and thus conserves the redox energy in a proton gradient. The protein is NAD(P)H-quinone oxidoreductase subunit 5, chloroplastic (ndhF) of Nicotiana tomentosiformis (Tobacco).